We begin with the raw amino-acid sequence, 392 residues long: ATP phosphoribosyltransferase regulatory subunit (392 aa).

This sequence belongs to the class-II aminoacyl-tRNA synthetase family. HisZ subfamily. As to quaternary structure, heteromultimer composed of HisG and HisZ subunits.

It localises to the cytoplasm. It participates in amino-acid biosynthesis; L-histidine biosynthesis; L-histidine from 5-phospho-alpha-D-ribose 1-diphosphate: step 1/9. In terms of biological role, required for the first step of histidine biosynthesis. May allow the feedback regulation of ATP phosphoribosyltransferase activity by histidine. The chain is ATP phosphoribosyltransferase regulatory subunit from Prochlorococcus marinus (strain MIT 9211).